The chain runs to 274 residues: 2,3,4,5-tetrahydropyridine-2,6-dicarboxylate N-succinyltransferase (274 aa).

Positions 104 and 141 each coordinate substrate.

Belongs to the transferase hexapeptide repeat family. In terms of assembly, homotrimer.

It is found in the cytoplasm. The catalysed reaction is (S)-2,3,4,5-tetrahydrodipicolinate + succinyl-CoA + H2O = (S)-2-succinylamino-6-oxoheptanedioate + CoA. It participates in amino-acid biosynthesis; L-lysine biosynthesis via DAP pathway; LL-2,6-diaminopimelate from (S)-tetrahydrodipicolinate (succinylase route): step 1/3. The chain is 2,3,4,5-tetrahydropyridine-2,6-dicarboxylate N-succinyltransferase from Escherichia coli O127:H6 (strain E2348/69 / EPEC).